Here is a 517-residue protein sequence, read N- to C-terminus: UDP-N-acetylmuramoyl-L-alanyl-D-glutamate--2,6-diaminopimelate ligase (517 aa).

2 residues coordinate UDP-N-acetyl-alpha-D-muramoyl-L-alanyl-D-glutamate: Leu-34 and Ser-36. 122–128 contributes to the ATP binding site; the sequence is GTSGKTT. UDP-N-acetyl-alpha-D-muramoyl-L-alanyl-D-glutamate is bound by residues 164–165, Ser-191, and Arg-199; that span reads TT. Residue Lys-231 is modified to N6-carboxylysine. Meso-2,6-diaminopimelate-binding positions include Arg-394, 418-421, Gly-476, and Glu-480; that span reads DNPR. The Meso-diaminopimelate recognition motif signature appears at 418-421; the sequence is DNPR.

It belongs to the MurCDEF family. MurE subfamily. Requires Mg(2+) as cofactor. In terms of processing, carboxylation is probably crucial for Mg(2+) binding and, consequently, for the gamma-phosphate positioning of ATP.

It localises to the cytoplasm. The catalysed reaction is UDP-N-acetyl-alpha-D-muramoyl-L-alanyl-D-glutamate + meso-2,6-diaminopimelate + ATP = UDP-N-acetyl-alpha-D-muramoyl-L-alanyl-gamma-D-glutamyl-meso-2,6-diaminopimelate + ADP + phosphate + H(+). It functions in the pathway cell wall biogenesis; peptidoglycan biosynthesis. In terms of biological role, catalyzes the addition of meso-diaminopimelic acid to the nucleotide precursor UDP-N-acetylmuramoyl-L-alanyl-D-glutamate (UMAG) in the biosynthesis of bacterial cell-wall peptidoglycan. The sequence is that of UDP-N-acetylmuramoyl-L-alanyl-D-glutamate--2,6-diaminopimelate ligase from Corynebacterium glutamicum (strain ATCC 13032 / DSM 20300 / JCM 1318 / BCRC 11384 / CCUG 27702 / LMG 3730 / NBRC 12168 / NCIMB 10025 / NRRL B-2784 / 534).